Reading from the N-terminus, the 1436-residue chain is tRNA (guanosine(18)-2'-O)-methyltransferase (1436 aa).

S-adenosyl-L-methionine is bound by residues 1365-1367, G1389, and 1409-1418; these read LEQ and IQQFGVIRSM.

Belongs to the class IV-like SAM-binding methyltransferase superfamily. RNA methyltransferase TrmH family.

Its subcellular location is the cytoplasm. It carries out the reaction guanosine(18) in tRNA + S-adenosyl-L-methionine = 2'-O-methylguanosine(18) in tRNA + S-adenosyl-L-homocysteine + H(+). Functionally, S-adenosyl-L-methionine-dependent 2'-O-ribose methyltransferase that catalyzes the formation of 2'-O-methylguanosine at position 18 (Gm18) in various tRNAs. In Saccharomyces cerevisiae (strain ATCC 204508 / S288c) (Baker's yeast), this protein is tRNA (guanosine(18)-2'-O)-methyltransferase.